Consider the following 92-residue polypeptide: MMKVIPLGERLLIKPIKEEKKTEGGIVLPDSAKEKPMKAEVVAVGKIDDEEKFDIKVGDKVIYSKYAGTEIKIDDEDYIIIDVNDILAKIEE.

Belongs to the GroES chaperonin family. As to quaternary structure, heptamer of 7 subunits arranged in a ring. Interacts with the chaperonin GroEL.

Its subcellular location is the cytoplasm. In terms of biological role, together with the chaperonin GroEL, plays an essential role in assisting protein folding. The GroEL-GroES system forms a nano-cage that allows encapsulation of the non-native substrate proteins and provides a physical environment optimized to promote and accelerate protein folding. GroES binds to the apical surface of the GroEL ring, thereby capping the opening of the GroEL channel. This is Co-chaperonin GroES from Thermotoga petrophila (strain ATCC BAA-488 / DSM 13995 / JCM 10881 / RKU-1).